Here is a 313-residue protein sequence, read N- to C-terminus: Adhesin MafA 1/2 (313 aa).

An N-terminal signal peptide occupies residues 1–14 (MKTLLLLIPLVLTA). A lipid anchor (N-palmitoyl cysteine) is attached at Cys-15. A lipid anchor (S-diacylglycerol cysteine) is attached at Cys-15. The span at 282-298 (GDTTAQNRPDFKQNNGK) shows a compositional bias: polar residues. The segment at 282–313 (GDTTAQNRPDFKQNNGKNPDVGNEVIRRRKGG) is disordered.

The protein belongs to the MafA family.

Its subcellular location is the cell outer membrane. This Neisseria meningitidis serogroup C (strain 053442) protein is Adhesin MafA 1/2 (mafA1).